The primary structure comprises 333 residues: Biotin synthase (333 aa).

A Radical SAM core domain is found at 47 to 276 (ADIQRASLLS…KARVRLSAGR (230 aa)). [4Fe-4S] cluster contacts are provided by C62, C66, and C69. [2Fe-2S] cluster-binding residues include C107, C139, C199, and R271.

Belongs to the radical SAM superfamily. Biotin synthase family. Homodimer. [4Fe-4S] cluster serves as cofactor. [2Fe-2S] cluster is required as a cofactor.

The enzyme catalyses (4R,5S)-dethiobiotin + (sulfur carrier)-SH + 2 reduced [2Fe-2S]-[ferredoxin] + 2 S-adenosyl-L-methionine = (sulfur carrier)-H + biotin + 2 5'-deoxyadenosine + 2 L-methionine + 2 oxidized [2Fe-2S]-[ferredoxin]. Its pathway is cofactor biosynthesis; biotin biosynthesis; biotin from 7,8-diaminononanoate: step 2/2. Catalyzes the conversion of dethiobiotin (DTB) to biotin by the insertion of a sulfur atom into dethiobiotin via a radical-based mechanism. This is Biotin synthase from Methylobacterium nodulans (strain LMG 21967 / CNCM I-2342 / ORS 2060).